The following is a 249-amino-acid chain: Probable transcriptional regulatory protein LBJ_0543 (249 aa).

It belongs to the TACO1 family.

It is found in the cytoplasm. The sequence is that of Probable transcriptional regulatory protein LBJ_0543 from Leptospira borgpetersenii serovar Hardjo-bovis (strain JB197).